A 56-amino-acid polypeptide reads, in one-letter code: UPF0391 membrane protein HCH_04387 (56 aa).

Helical transmembrane passes span 6–26 (IVFF…IAAA) and 30–50 (IAQI…IAGG).

This sequence belongs to the UPF0391 family.

Its subcellular location is the cell membrane. The polypeptide is UPF0391 membrane protein HCH_04387 (Hahella chejuensis (strain KCTC 2396)).